The following is a 179-amino-acid chain: Crossover junction endodeoxyribonuclease RuvC (179 aa).

Residues aspartate 14, glutamate 74, and aspartate 147 contribute to the active site. Mg(2+) is bound by residues aspartate 14, glutamate 74, and aspartate 147.

Belongs to the RuvC family. Homodimer which binds Holliday junction (HJ) DNA. The HJ becomes 2-fold symmetrical on binding to RuvC with unstacked arms; it has a different conformation from HJ DNA in complex with RuvA. In the full resolvosome a probable DNA-RuvA(4)-RuvB(12)-RuvC(2) complex forms which resolves the HJ. Mg(2+) is required as a cofactor.

It localises to the cytoplasm. It carries out the reaction Endonucleolytic cleavage at a junction such as a reciprocal single-stranded crossover between two homologous DNA duplexes (Holliday junction).. The RuvA-RuvB-RuvC complex processes Holliday junction (HJ) DNA during genetic recombination and DNA repair. Endonuclease that resolves HJ intermediates. Cleaves cruciform DNA by making single-stranded nicks across the HJ at symmetrical positions within the homologous arms, yielding a 5'-phosphate and a 3'-hydroxyl group; requires a central core of homology in the junction. The consensus cleavage sequence is 5'-(A/T)TT(C/G)-3'. Cleavage occurs on the 3'-side of the TT dinucleotide at the point of strand exchange. HJ branch migration catalyzed by RuvA-RuvB allows RuvC to scan DNA until it finds its consensus sequence, where it cleaves and resolves the cruciform DNA. The protein is Crossover junction endodeoxyribonuclease RuvC of Rubrobacter xylanophilus (strain DSM 9941 / JCM 11954 / NBRC 16129 / PRD-1).